The following is a 521-amino-acid chain: MDNDSQYSGYSYKSGQSRSSRKHRDRRERHRSKSREGSRGDKSVTIQAPGEPLLDNESTRGEDRDDNWGETTTVVTGTSEHSISHDDITRITKDMEDSAKLDCSRHLGVVIAGALALLSFLTPIAFMLLPQILWREDLEQCGTACEGLFISVAFKLLILLLGSWALFFRRPKAFFPRVFVFRALLMVLVFLLVVSYWLFYGVRILESRDKNYQGIVQYAVSLVDALLFVHYLAVVLLELRQLQPQFTIKVVRSTDGASRFYNIGHLSIQRVAVWILENYYHDFPVYNPALLNLPKSILSKKMSGFKVYSLGEENNTNNSTGQSRAVIAAAARRRDNSHNEYYYEEAEHERRVRKRKARLVVAVEEAFTHIKRLQDEDPKNPREIMDPREAAQAIFASMARAMQKYLRTTKQQPYHTMESILQHLEFCITHDMTPKAFLERYLGPGPTIQYHKDRWLAKQWTLVSEEPVTNGLKDGVVFELKRQDFSLVVSTKKIPFFKLSEEFVDPKSHKFVMRLQSETSV.

Positions 1–18 (MDNDSQYSGYSYKSGQSR) are enriched in low complexity. The interval 1–73 (MDNDSQYSGY…RDDNWGETTT (73 aa)) is disordered. Over 1–108 (MDNDSQYSGY…AKLDCSRHLG (108 aa)) the chain is Cytoplasmic. Positions 19–33 (SSRKHRDRRERHRSK) are enriched in basic residues. The span at 57–67 (ESTRGEDRDDN) shows a compositional bias: basic and acidic residues. A helical transmembrane segment spans residues 109-129 (VVIAGALALLSFLTPIAFMLL). Topologically, residues 130 to 147 (PQILWREDLEQCGTACEG) are extracellular. The chain crosses the membrane as a helical span at residues 148 to 168 (LFISVAFKLLILLLGSWALFF). At 169-178 (RRPKAFFPRV) the chain is on the cytoplasmic side. The helical transmembrane segment at 179 to 199 (FVFRALLMVLVFLLVVSYWLF) threads the bilayer. Residues 200–218 (YGVRILESRDKNYQGIVQY) lie on the Extracellular side of the membrane. A helical membrane pass occupies residues 219–239 (AVSLVDALLFVHYLAVVLLEL). Residues 240-521 (RQLQPQFTIK…VMRLQSETSV (282 aa)) are Cytoplasmic-facing. The PDZ-binding signature appears at 518-521 (ETSV).

It belongs to the Vang family. Interacts with dvl/dsh. Interacts with prickle3. As to expression, during gastrulation, broadly expressed in the dorsal region in both mesodermal and neural tissues. From the neurula stages, expressed throughout the neural tube. In tailbud stages, expression declines in the anterior notochord but remains strong in the posterior notochord and in the neural tube. Also weakly expressed in the prenephritic region of late tailbud embryos.

The protein localises to the cell membrane. Has a role in non-canonical Wnt/planar cell polarity (PCP) signaling; can recruit dvl/dsh and prickle from the cytoplasm to the plasma membrane. Acts in a PCP complex to regulate the polarized assembly of fibronectrin on the surface of the mesoderm during gastrulation. Regulates convergent extension in both dorsal mesoderm and neural tissue without affecting cell fate. Regulates neural fold closure during neurulation. May be required for cell surface localization of fzd3 and fzd6 in the inner ear. The chain is Vang-like protein 2-B (vangl2-b) from Xenopus laevis (African clawed frog).